A 470-amino-acid polypeptide reads, in one-letter code: Cyclin-B1-3 (470 aa).

This sequence belongs to the cyclin family. Cyclin AB subfamily.

The chain is Cyclin-B1-3 (CYCB1-3) from Oryza sativa subsp. japonica (Rice).